A 356-amino-acid chain; its full sequence is UDP-N-acetylenolpyruvoylglucosamine reductase (356 aa).

The 209-residue stretch at 19 to 227 (LGGPAARFCS…RDAVLSLRRS (209 aa)) folds into the FAD-binding PCMH-type domain. Residue R167 is part of the active site. S244 functions as the Proton donor in the catalytic mechanism. E348 is a catalytic residue.

It belongs to the MurB family. FAD is required as a cofactor.

Its subcellular location is the cytoplasm. The catalysed reaction is UDP-N-acetyl-alpha-D-muramate + NADP(+) = UDP-N-acetyl-3-O-(1-carboxyvinyl)-alpha-D-glucosamine + NADPH + H(+). Its pathway is cell wall biogenesis; peptidoglycan biosynthesis. Its function is as follows. Cell wall formation. This is UDP-N-acetylenolpyruvoylglucosamine reductase from Thermobifida fusca (strain YX).